The sequence spans 200 residues: Large ribosomal subunit protein uL4 (200 aa).

The disordered stretch occupies residues 43–71 (RAQKTRAEVSGSGKKPWRQKGTGRARSGD).

Belongs to the universal ribosomal protein uL4 family. Part of the 50S ribosomal subunit.

One of the primary rRNA binding proteins, this protein initially binds near the 5'-end of the 23S rRNA. It is important during the early stages of 50S assembly. It makes multiple contacts with different domains of the 23S rRNA in the assembled 50S subunit and ribosome. Its function is as follows. Forms part of the polypeptide exit tunnel. The sequence is that of Large ribosomal subunit protein uL4 from Mannheimia succiniciproducens (strain KCTC 0769BP / MBEL55E).